Consider the following 222-residue polypeptide: UPF0502 protein XCC4136 (222 aa).

The protein belongs to the UPF0502 family.

This chain is UPF0502 protein XCC4136, found in Xanthomonas campestris pv. campestris (strain ATCC 33913 / DSM 3586 / NCPPB 528 / LMG 568 / P 25).